The primary structure comprises 1286 residues: DNA-directed RNA polymerase 147 kDa polypeptide (1286 aa).

Belongs to the poxviridae DNA-directed RNA polymerase 147 kDa subunit family. As to quaternary structure, the DNA-dependent RNA polymerase used for intermediate and late genes expression consists of eight subunits Rpo30/OPG66, Rpo7/OPG90, Rpo22/OPG103, Rpo147/OPG105, Rpo18/OPG119, Rpo19/OPG131, Rpo132/OPG151 and Rpo35/OPG156. The same holoenzyme, with the addition of the transcription-specificity factor OPG109, is used for early gene expression.

The protein resides in the virion. It carries out the reaction RNA(n) + a ribonucleoside 5'-triphosphate = RNA(n+1) + diphosphate. Its function is as follows. Part of the DNA-dependent RNA polymerase which catalyzes the transcription of viral DNA into RNA using the four ribonucleoside triphosphates as substrates. Responsible for the transcription of early, intermediate and late genes. DNA-dependent RNA polymerase associates with the early transcription factor (ETF), itself composed of OPG118 and OPG133, thereby allowing the early genes transcription. Late transcription, and probably also intermediate transcription, require newly synthesized RNA polymerase. The protein is DNA-directed RNA polymerase 147 kDa polypeptide (OPG105) of Vaccinia virus (strain Ankara) (VACV).